The following is a 336-amino-acid chain: Serpentine receptor class gamma-13 (336 aa).

The next 8 membrane-spanning stretches (helical) occupy residues Leu32–Ile52, Phe68–Leu88, Phe93–Phe113, Val133–Trp153, Ile156–Leu176, Phe210–Ile230, Thr246–Phe266, and Leu277–Ile297.

This sequence belongs to the nematode receptor-like protein srg family.

The protein resides in the membrane. This is Serpentine receptor class gamma-13 (srg-13) from Caenorhabditis elegans.